A 225-amino-acid chain; its full sequence is NAD(P)H-quinone oxidoreductase subunit K, chloroplastic (225 aa).

4 residues coordinate [4Fe-4S] cluster: cysteine 43, cysteine 44, cysteine 108, and cysteine 139.

This sequence belongs to the complex I 20 kDa subunit family. In terms of assembly, NDH is composed of at least 16 different subunits, 5 of which are encoded in the nucleus. It depends on [4Fe-4S] cluster as a cofactor.

The protein resides in the plastid. Its subcellular location is the chloroplast thylakoid membrane. It carries out the reaction a plastoquinone + NADH + (n+1) H(+)(in) = a plastoquinol + NAD(+) + n H(+)(out). The enzyme catalyses a plastoquinone + NADPH + (n+1) H(+)(in) = a plastoquinol + NADP(+) + n H(+)(out). In terms of biological role, NDH shuttles electrons from NAD(P)H:plastoquinone, via FMN and iron-sulfur (Fe-S) centers, to quinones in the photosynthetic chain and possibly in a chloroplast respiratory chain. The immediate electron acceptor for the enzyme in this species is believed to be plastoquinone. Couples the redox reaction to proton translocation, and thus conserves the redox energy in a proton gradient. The chain is NAD(P)H-quinone oxidoreductase subunit K, chloroplastic from Olimarabidopsis pumila (Dwarf rocket).